Here is a 274-residue protein sequence, read N- to C-terminus: Pantothenate synthetase (274 aa).

27–34 (MGALHKGH) serves as a coordination point for ATP. The active-site Proton donor is His34. Gln58 contacts (R)-pantoate. Gln58 is a beta-alanine binding site. Residue 145-148 (GQKD) participates in ATP binding. Gln151 contributes to the (R)-pantoate binding site. Position 182–185 (182–185 (LSSR)) interacts with ATP.

The protein belongs to the pantothenate synthetase family. As to quaternary structure, homodimer.

The protein resides in the cytoplasm. The enzyme catalyses (R)-pantoate + beta-alanine + ATP = (R)-pantothenate + AMP + diphosphate + H(+). It functions in the pathway cofactor biosynthesis; (R)-pantothenate biosynthesis; (R)-pantothenate from (R)-pantoate and beta-alanine: step 1/1. Catalyzes the condensation of pantoate with beta-alanine in an ATP-dependent reaction via a pantoyl-adenylate intermediate. The polypeptide is Pantothenate synthetase (Wolinella succinogenes (strain ATCC 29543 / DSM 1740 / CCUG 13145 / JCM 31913 / LMG 7466 / NCTC 11488 / FDC 602W) (Vibrio succinogenes)).